Consider the following 433-residue polypeptide: MKIIIFVCFILIFYLPIQKKHVNSQQQGIDSDDGDAESFFNKSYSEHQSALEQKIFRGYNPKNRPMKNASFPTIVDVHWHIIHVSINQREQTMTVHGHIYMRWFDEFLVWDPKDFNNIQYARVKKWQVWQPKIKVSNSASGLGSAFDFSTSAHVIIQMMGKDRAKVEMYPTFSIKVGCAFDFTDYPYDLNKCAINLFSTSTMADVQLQNLYAIPPTLSFGWEEQKMKRIISDFKIQNVSSSALYYTNGNITSSAPITGFDLGSTWSMLAVTVSFVRHSPLFEAAVVTPCIVVASLISMTFFIDSLSSTFLLMMLHFYVQLIFLHDLVEKLPLSVSEIPFCIKLIGILMYTNGLTLVLHSSLLCGSYYKCPVPQQLNKIFVIEEYIPNTFKEKVQIKKEESNKSWRDLMKLIRPIIGFVLIILLICMFFVCLLL.

The N-terminal stretch at 1-24 (MKIIIFVCFILIFYLPIQKKHVNS) is a signal peptide. N-linked (GlcNAc...) asparagine glycosylation is found at asparagine 41 and asparagine 68. Cysteine 178 and cysteine 192 form a disulfide bridge. Residues asparagine 237 and asparagine 249 are each glycosylated (N-linked (GlcNAc...) asparagine). The next 4 membrane-spanning stretches (helical) occupy residues 282 to 302 (EAAV…TFFI), 307 to 327 (STFL…HDLV), 337 to 357 (IPFC…TLVL), and 413 to 433 (PIIG…CLLL).

This sequence belongs to the ligand-gated ion channel (TC 1.A.9) family. Acetylcholine receptor (TC 1.A.9.1) subfamily. Expressed in coelomocytes.

The protein resides in the cytoplasmic vesicle membrane. Its function is as follows. Thought to regulate endocytosis in coelomocytes through modulation of phospholipase C activity. Possible acetylcholine receptor. The sequence is that of Acetylcholine receptor-like protein cup-4 (cup-4) from Caenorhabditis elegans.